A 1206-amino-acid polypeptide reads, in one-letter code: Pre-mRNA-splicing factor prp12 (1206 aa).

The protein belongs to the RSE1 family. Belongs to the 40S cdc5-associated complex (or cwf complex), a spliceosome sub-complex reminiscent of a late-stage spliceosome composed of the U2, U5 and U6 snRNAs and at least brr2, cdc5, cwf2/prp3, cwf3/syf1, cwf4/syf3, cwf5/ecm2, spp42/cwf6, cwf7/spf27, cwf8, cwf9, cwf10, cwf11, cwf12, prp45/cwf13, cwf14, cwf15, cwf16, cwf17, cwf18, cwf19, cwf20, cwf21, cwf22, cwf23, cwf24, cwf25, cwf26, cyp7/cwf27, cwf28, cwf29/ist3, lea1, msl1, prp5/cwf1, prp10, prp12/sap130, prp17, prp22, sap61, sap62, sap114, sap145, slu7, smb1, smd1, smd3, smf1, smg1 and syf2.

It is found in the nucleus. Functionally, involved in mRNA splicing and G2/M transition. The protein is Pre-mRNA-splicing factor prp12 (prp12) of Schizosaccharomyces pombe (strain 972 / ATCC 24843) (Fission yeast).